Here is a 343-residue protein sequence, read N- to C-terminus: Dihydroorotase (343 aa).

Residues His13 and His15 each coordinate Zn(2+). Substrate contacts are provided by residues 15–17 (HLR) and Asn41. Zn(2+)-binding residues include Lys99, His136, and His174. The residue at position 99 (Lys99) is an N6-carboxylysine. Position 136 (His136) interacts with substrate. Residue Leu219 participates in substrate binding. Asp247 is a binding site for Zn(2+). The active site involves Asp247. Residues His251 and Ala263 each coordinate substrate.

It belongs to the metallo-dependent hydrolases superfamily. DHOase family. Class II DHOase subfamily. As to quaternary structure, homodimer. The cofactor is Zn(2+).

The enzyme catalyses (S)-dihydroorotate + H2O = N-carbamoyl-L-aspartate + H(+). It functions in the pathway pyrimidine metabolism; UMP biosynthesis via de novo pathway; (S)-dihydroorotate from bicarbonate: step 3/3. Functionally, catalyzes the reversible cyclization of carbamoyl aspartate to dihydroorotate. This Shewanella sp. (strain ANA-3) protein is Dihydroorotase.